Reading from the N-terminus, the 60-residue chain is Large ribosomal subunit protein uL30 (60 aa).

Belongs to the universal ribosomal protein uL30 family. In terms of assembly, part of the 50S ribosomal subunit.

The polypeptide is Large ribosomal subunit protein uL30 (Agathobacter rectalis (strain ATCC 33656 / DSM 3377 / JCM 17463 / KCTC 5835 / VPI 0990) (Eubacterium rectale)).